Consider the following 157-residue polypeptide: Thioredoxin 2 (157 aa).

The signal sequence occupies residues 1-23 (MKKYIFFFLFSFINFFFVYDVTC). The 112-residue stretch at 46-157 (LRMFKKVPRL…DLIALIKKHL (112 aa)) folds into the Thioredoxin domain. Residues Cys82 and Cys85 each act as nucleophile in the active site. Cys82 and Cys85 form a disulfide bridge.

Belongs to the thioredoxin family. In terms of assembly, monomer. Component of the Plasmodium translocon of exported proteins (PTEX) complex composed of HSP101, EXP2, PTEX150, PTEX88 and TRX2. The disulfide bond between Cys-82 and Cys-85 acts as a redox-active center and is reduced by thioredoxin reductase TRXR.

It localises to the parasitophorous vacuole membrane. Participates in various redox reactions through the reversible oxidation of its active center dithiol to a disulfide and catalyzes dithiol-disulfide exchange reactions. As part of the translocon PTEX complex, plays a role in the export of parasite proteins into the host erythrocyte. The translocon PTEX complex is a multi-protein machinery resident in the parasite parasitophorous vacuolar membrane, responsible for protein secretion into host cells. May contribute to the unfolding of proteins containing the PEXEL localization motif before their passage through the translocon or regulate the PTEX complex function. The protein is Thioredoxin 2 of Plasmodium falciparum (isolate 3D7).